A 770-amino-acid polypeptide reads, in one-letter code: MFRYESLEDCPLDEDEDAFQGLGEEDEEIDQFNDDTFGSGAVDDDWQEAHERLAELEEKLPVAVNEQTGNGERDEMDLLGDHEENLAERLSKMVIENELEDPAIMRAVQTRPVLQPQPGSLNSSIWDGSEVLRRIRGPLLAQEMPTVSVLEYALPQRPPQGPEDDRDLSERALPRRSTSPIIGSPPVRAVPIGTPPKQMAVPSFTQQILCPKPVHVRPPMPPRYPAPYGERMSPNQLCSVPNSSLLGHPFPPSVPPVLSPLQRAQLLGGAQLQPGRMSPSQFARVPGFVGSPLAAMNPKLLQGRVGQMLPPAPGFRAFFSAPPSATPPPQQHPPGPGPHLQNLRSQAPMFRPDTTHLHPQHRRLLHQRQQQNRSQHRNLNGAGDRGSHRSSHQDHLRKDPYANLMLQREKDWVSKIQMMQLQSTDPYLDDFYYQNYFEKLEKLSAAEEIQGDGPKKERTKLITPQVAKLEHAYKPVQFEGSLGKLTVSSVNNPRKMIDAVVTSRSEDDETKEKQVRDKRRKTLVIIEKTYSLLLDVEDYERRYLLSLEEERPALMDDRKHKICSMYDNLRGKLPGQERPSDDHFVQIMCIRKGKRMVARILPFLSTEQAADILMTTARNLPFLIKKDAQDEVLPCLLSPFSLLLYHLPSVSITSLLRQLMNLPQSAATPALSNPHLTAVLQNKFGLSLLLILLSRGEDLQSSDPATESTQNNQWTEVMFMATRELLRIPQAALAKPISIPTNLVSLFSRYVDRQKLNLLETKLQLVQGIR.

Positions 1-26 (MFRYESLEDCPLDEDEDAFQGLGEED) are disordered. The interval 1-84 (MFRYESLEDC…EMDLLGDHEE (84 aa)) is region A; interaction with DDX6/RCK. The tract at residues 1 to 397 (MFRYESLEDC…HRSSHQDHLR (397 aa)) is involved in nuclear foci localization. Over residues 7-26 (LEDCPLDEDEDAFQGLGEED) the composition is skewed to acidic residues. The region N; interaction with decapping machinery stretch occupies residues 85 to 388 (NLAERLSKMV…LNGAGDRGSH (304 aa)). The Nuclear export signal signature appears at 86-95 (LAERLSKMVI). At Ser177 the chain carries Phosphoserine. Thr178 carries the phosphothreonine modification. Phosphoserine is present on residues Ser179 and Ser184. Thr194 is modified (phosphothreonine). An asymmetric dimethylarginine mark is found at Arg217, Arg223, and Arg263. The tract at residues 223 to 397 (RYPAPYGERM…HRSSHQDHLR (175 aa)) is involved in RNA-binding. Ser278 is modified (phosphoserine). An Asymmetric dimethylarginine modification is found at Arg284. The segment covering 314 to 323 (GFRAFFSAPP) has biased composition (low complexity). 2 disordered regions span residues 314-344 (GFRA…QNLR) and 360-399 (QHRR…LRKD). A compositionally biased stretch (pro residues) spans 324-337 (SATPPPQQHPPGPG). The span at 367–380 (QRQQQNRSQHRNLN) shows a compositional bias: low complexity. Arg385 is modified (omega-N-methylarginine). Positions 385-399 (RGSHRSSHQDHLRKD) are enriched in basic and acidic residues. Positions 389–448 (RSSHQDHLRKDPYANLMLQREKDWVSKIQMMQLQSTDPYLDDFYYQNYFEKLEKLSAAEE) are region H. An involved in nuclear speckle localization region spans residues 398 to 770 (KDPYANLMLQ…TKLQLVQGIR (373 aa)). The region C stretch occupies residues 449–770 (IQGDGPKKER…TKLQLVQGIR (322 aa)).

It belongs to the PAT1 family. In terms of assembly, interacts (via region A) with DDX6/RCK. Interacts (via region H and region C) with LSM1 and LSM4. Interacts (via region N) with DCP1A, DCP2, EDC3, EDC4 and XRN1. Interacts with the CCR4-NOT complex. Interacts with the Lsm-containing SMN-Sm protein complex. Interacts with EIF4ENIF1/4E-T. In terms of tissue distribution, ubiquitous.

The protein resides in the cytoplasm. It is found in the P-body. Its subcellular location is the nucleus. It localises to the PML body. The protein localises to the nucleus speckle. In terms of biological role, RNA-binding protein involved in deadenylation-dependent decapping of mRNAs, leading to the degradation of mRNAs. Acts as a scaffold protein that connects deadenylation and decapping machinery. Required for cytoplasmic mRNA processing body (P-body) assembly. (Microbial infection) In case of infection, required for translation and replication of hepatitis C virus (HCV). In Homo sapiens (Human), this protein is Protein PAT1 homolog 1 (PATL1).